A 131-amino-acid polypeptide reads, in one-letter code: Profilin-2 (131 aa).

The protein belongs to the profilin family. Occurs in many kinds of cells as a complex with monomeric actin in a 1:1 ratio. Expressed in vascular bundles of roots, hypocotyls, cotyledons, leaves, sepals, petals, stamen filaments and stalks of developing seeds. Expressed in leaf epidermal cells, trichomes and stem epidermal cells. Detected in phloem exudates (at protein level).

It is found in the cytoplasm. It localises to the cytoskeleton. The protein localises to the endoplasmic reticulum. Its subcellular location is the cytosol. The protein resides in the nucleus. Its function is as follows. Binds to actin monomers and regulates the organization of the actin cytoskeleton. At high concentrations, profilin prevents the polymerization of actin, whereas it enhances it at low concentrations. At low concentrations, associates with the poly-proline motif of formins to enhance actin filament elongation rate. Binds G-actin and poly-L-proline with low affinity in vitro. Binds ACT1, ACT7 and ACT11 and inhibits actin polymerization. May be involved in the cross-talk between vesicular trafficking and the actin cytoskeleton. Inhibits cell growth of various pathogenic fungal strains. May play a role as antifungal proteins in the defense system against fungal pathogen attacks. In Arabidopsis thaliana (Mouse-ear cress), this protein is Profilin-2.